Reading from the N-terminus, the 113-residue chain is Dynein light chain Tctex-type 1 (113 aa).

An N-acetylmethionine modification is found at methionine 1. Residues 41-113 are interaction with GNB1; sequence QWTTNVLEQT…CIVSTFGLSI (73 aa).

The protein belongs to the dynein light chain Tctex-type family. As to quaternary structure, homodimer. The cytoplasmic dynein 1 complex consists of two catalytic heavy chains (HCs) and a number of non-catalytic subunits presented by intermediate chains (ICs), light intermediate chains (LICs) and light chains (LCs); the composition seems to vary in respect to the IC, LIC and LC composition. The heavy chain homodimer serves as a scaffold for the probable homodimeric assembly of the respective non-catalytic subunits. The ICs and LICs bind directly to the HC dimer and the LCs assemble on the IC dimer. DYNLT1 and DYNLT3 compete for association with dynein IC (DYNC1I1 or DYNC1I2). Self-associates. Interacts with RHO. Interacts with DYNC1I1 and DYNC1I2. Interacts with DOC2A, DOC2B and SCN10A. Interacts with PVR. Interacts with SVIL isoform 2. Interacts with GNB1; the interaction occurs in presence of guanine nucleotide-binding protein G(T) subunit gamma; the interaction diminishes the association of DYNLT1 with dynein IC (DYNC1I1 or DYNC1I2). Interacts with GNB2, GNB3 and GNB5; the interactions occur in presence of guanine nucleotide-binding protein G(T) subunit gamma. Interacts with ACVR2B and ARHGEF2. Interacts with DNAI4. Interacts with CFAP61. In terms of processing, phosphorylated by BMPR2. The phosphorylation status is proposed to regulate the association with the cytoplasmic dynein complex and may have role in cytoplasmic dynein cargo release. As to expression, high level in testis (germ cell-specific). Expressed in sperm (at protein level). 200-fold lower in liver, brain, heart, spleen, and kidney. Levels in thymus and two embryonal carcinoma cell lines were several-fold higher than this low constitutive level.

Its subcellular location is the golgi apparatus. It localises to the cytoplasm. The protein localises to the cytoskeleton. The protein resides in the spindle. Acts as one of several non-catalytic accessory components of the cytoplasmic dynein 1 complex that are thought to be involved in linking dynein to cargos and to adapter proteins that regulate dynein function. Cytoplasmic dynein 1 acts as a motor for the intracellular retrograde motility of vesicles and organelles along microtubules. Binds to transport cargos and is involved in apical cargo transport such as rhodopsin-bearing vesicles in polarized epithelia. May also be a accessory component of axonemal dynein. Plays an important role in male germ cell development and function. Candidate for involvement in male sterility. Functionally, plays a role in neuronal morphogenesis; the function is independent of cytoplasmic dynein and seems to be coupled to regulation of the actin cytoskeleton by enhancing Rac1 activity. The function in neurogenesis may be regulated by association with a G-protein beta-gamma dimer. May function as a receptor-independent activator of heterotrimeric G-protein signaling; the activation appears to be independent of a nucleotide exchange. Plays a role in regulating neurogenesis; inhibits the genesis of neurons from precursor cells during cortical development presumably by antagonizing ARHGEF2. Unrelated to the role in retrograde microtubule-associated movement may play a role in the dimerization of cytoplasmic proteins/domains such as for ACVR2B. Binds to the cytoplasmic domain of ACVR2B and, in vitro, inhibits ACVR2B signaling. Involved in the regulation of mitotic spindle orientation. The polypeptide is Dynein light chain Tctex-type 1 (Dynlt1) (Mus musculus (Mouse)).